The sequence spans 622 residues: MSASSSDPFHSFAKTSFTSKAAKRATAHSLPPLPGPGDLPPGMNVEYDVAIVGSGPIGSTYARELVEAGFNVAMFEIGEIDSGLKIGSHKKNTVEYQKNIDKFVNVIQGQLMPVSVPVNTMVVDTLSPASWQASTFFVRNGANPEQDPLRNLSGQAVTRVVGGMSTHWTCATPRFEKLQRPLLVKNDPVADDAEWDRLYKKAESYFKTGTTQFAESIRHNLVLKKLQEEYKGVRDFQQIPLAATRQSPTFVEWSSAHTVFDLENRPNKDAPKQRFNLFPAVACTSVRRNDANSEIIGLDVRDLHGGKSITIKAKVYILTAGAVHNAQLLAASGFGQLGRPDPAKPLPSLLPYLGTHITEQTLVFCQTVMSTELINSVTADMTIVGKPGDPDYSVTYTSGSPNNKHPDWWNEKVKKHMMDHQEDPLPIPFEDPEPQVTTLFKASHPWHTQIHRDAFSYGAVQQSIDSRLIVDWRFFGRTEPKEENKLWFSDKITDAYNLPQPTFDFRFPGGREAEDMMTDMCVMSAKIGGFLPGSYPQFMEPGLVLHLGGTHRMGFDEKADKCCVDTDSRVFGFKNLFLGGCGNIPTAYAANPTLTAMSLAIKSCEYIKKNFEPSPNPVKHHN.

The first 28 residues, 1 to 28 (MSASSSDPFHSFAKTSFTSKAAKRATAH), serve as a signal peptide directing secretion. Positions 29–37 (SLPPLPGPG) are excised as a propeptide. H167 is modified (tele-8alpha-FAD histidine). Substrate contacts are provided by Q449 and H451. H546 functions as the Proton acceptor in the catalytic mechanism. N591 is a catalytic residue.

The protein belongs to the GMC oxidoreductase family. As to quaternary structure, homotetramer. It depends on FAD as a cofactor. Not glycosylated.

It is found in the periplasm. The enzyme catalyses D-glucose + O2 = 2-dehydro-D-glucose + H2O2. Catalyzes the oxidation of various aldopyranoses and disaccharides on carbon-2 to the corresponding 2-keto sugars concomitant with the reduction of O(2) to H(2)O(2). Plays an important role in lignin degradation of wood rot fungi by supplying the essential cosubstrate H(2)O(2) for the ligninolytic peroxidases, lignin peroxidase and manganese-dependent peroxidase. The preferred substrate is D-glucose which is converted to 2-dehydro-D-glucose, an intermediate of a secondary metabolic pathway leading to the antibiotic cortalcerone. Also acts on D-xylose, together with D-glucose the major sugars derived from wood, on L-sorbose, D-galactose and 1,5-anhydroglucitol, a diagnostic marker of diabetes mellitus. This Phlebiopsis gigantea (White-rot fungus) protein is Pyranose 2-oxidase (p2ox).